The sequence spans 357 residues: Glutamate 5-kinase (357 aa).

Residue Lys7 participates in ATP binding. Residues Ser43, Asp130, and Asn142 each contribute to the substrate site. Residues 162-163 (TD) and 205-211 (TGGMTTK) each bind ATP. Positions 270–341 (EGELCLDQGA…QALSVVTDAE (72 aa)) constitute a PUA domain.

This sequence belongs to the glutamate 5-kinase family.

It is found in the cytoplasm. The catalysed reaction is L-glutamate + ATP = L-glutamyl 5-phosphate + ADP. It participates in amino-acid biosynthesis; L-proline biosynthesis; L-glutamate 5-semialdehyde from L-glutamate: step 1/2. Its function is as follows. Catalyzes the transfer of a phosphate group to glutamate to form L-glutamate 5-phosphate. In Synechococcus sp. (strain CC9902), this protein is Glutamate 5-kinase.